The following is a 340-amino-acid chain: Probable dual-specificity RNA methyltransferase RlmN (340 aa).

Residue glutamate 93 is the Proton acceptor of the active site. The 229-residue stretch at 99-327 folds into the Radical SAM core domain; the sequence is TAKRLTVCVS…VSVRYSRGLE (229 aa). A disulfide bond links cysteine 106 and cysteine 332. The [4Fe-4S] cluster site is built by cysteine 113, cysteine 117, and cysteine 120. Residues 160–161, serine 190, 213–215, and asparagine 289 each bind S-adenosyl-L-methionine; these read GE and SLH. Cysteine 332 functions as the S-methylcysteine intermediate in the catalytic mechanism.

It belongs to the radical SAM superfamily. RlmN family. The cofactor is [4Fe-4S] cluster.

The protein resides in the cytoplasm. The catalysed reaction is adenosine(2503) in 23S rRNA + 2 reduced [2Fe-2S]-[ferredoxin] + 2 S-adenosyl-L-methionine = 2-methyladenosine(2503) in 23S rRNA + 5'-deoxyadenosine + L-methionine + 2 oxidized [2Fe-2S]-[ferredoxin] + S-adenosyl-L-homocysteine. It carries out the reaction adenosine(37) in tRNA + 2 reduced [2Fe-2S]-[ferredoxin] + 2 S-adenosyl-L-methionine = 2-methyladenosine(37) in tRNA + 5'-deoxyadenosine + L-methionine + 2 oxidized [2Fe-2S]-[ferredoxin] + S-adenosyl-L-homocysteine. In terms of biological role, specifically methylates position 2 of adenine 2503 in 23S rRNA and position 2 of adenine 37 in tRNAs. This Rippkaea orientalis (strain PCC 8801 / RF-1) (Cyanothece sp. (strain PCC 8801)) protein is Probable dual-specificity RNA methyltransferase RlmN.